The sequence spans 350 residues: Enoyl-[acyl-carrier-protein] reductase, mitochondrial (350 aa).

A mitochondrion-targeting transit peptide spans methionine 1–tyrosine 14. The active-site Proton donor is the tyrosine 69. Residues asparagine 143, asparagine 169–valine 172, arginine 192–glycine 194, tyrosine 261–methionine 264, phenylalanine 286–leucine 288, and lysine 343 contribute to the NADP(+) site.

It belongs to the zinc-containing alcohol dehydrogenase family. Quinone oxidoreductase subfamily. Homodimer.

Its subcellular location is the mitochondrion. The catalysed reaction is a 2,3-saturated acyl-[ACP] + NADP(+) = a (2E)-enoyl-[ACP] + NADPH + H(+). Its function is as follows. Catalyzes the NADPH-dependent reduction of trans-2-enoyl thioesters in mitochondrial fatty acid synthesis (fatty acid synthesis type II). Fatty acid chain elongation in mitochondria uses acyl carrier protein (ACP) as an acyl group carrier, but the enzyme accepts both ACP and CoA thioesters as substrates in vitro. The sequence is that of Enoyl-[acyl-carrier-protein] reductase, mitochondrial (mecr) from Dictyostelium discoideum (Social amoeba).